A 784-amino-acid polypeptide reads, in one-letter code: LPS-assembly protein LptD (784 aa).

An N-terminal signal peptide occupies residues 1 to 24 (MKKRIPTLLATMIATALYSQQGLA). 2 disulfides stabilise this stretch: Cys-31/Cys-724 and Cys-173/Cys-725.

The protein belongs to the LptD family. As to quaternary structure, component of the lipopolysaccharide transport and assembly complex. Interacts with LptE and LptA. May interact with LptE during assembly of LptD by the beta-barrel assembly machine (BAM). Also interacts with LptM, which promotes the efficient assembly of the LptDE translocon by the BAM complex. Post-translationally, contains two intramolecular disulfide bonds. At least one disulfide bond is required for activity, and protein is probably fully oxidized in vivo.

It is found in the cell outer membrane. In terms of biological role, together with LptE, is involved in the assembly of lipopolysaccharide (LPS) at the surface of the outer membrane. Contributes to n-hexane resistance. The polypeptide is LPS-assembly protein LptD (Escherichia coli (strain K12)).